The chain runs to 247 residues: ATP synthase subunit a, chloroplastic (247 aa).

5 helical membrane passes run 38-58, 95-115, 134-154, 199-219, and 220-240; these read QVLI…IIAV, VPFI…GALL, INTT…AGLS, LVVV…VMFL, and GLFT…AYIG.

Belongs to the ATPase A chain family. In terms of assembly, F-type ATPases have 2 components, CF(1) - the catalytic core - and CF(0) - the membrane proton channel. CF(1) has five subunits: alpha(3), beta(3), gamma(1), delta(1), epsilon(1). CF(0) has four main subunits: a, b, b' and c.

Its subcellular location is the plastid. The protein localises to the chloroplast thylakoid membrane. Its function is as follows. Key component of the proton channel; it plays a direct role in the translocation of protons across the membrane. This Oryza nivara (Indian wild rice) protein is ATP synthase subunit a, chloroplastic.